An 89-amino-acid polypeptide reads, in one-letter code: Small ribosomal subunit protein uS15 (89 aa).

The span at 1–21 (MALTTEEKKQVLSEYGLHETD) shows a compositional bias: basic and acidic residues. A disordered region spans residues 1–24 (MALTTEEKKQVLSEYGLHETDTGS).

Belongs to the universal ribosomal protein uS15 family. As to quaternary structure, part of the 30S ribosomal subunit. Forms a bridge to the 50S subunit in the 70S ribosome, contacting the 23S rRNA.

One of the primary rRNA binding proteins, it binds directly to 16S rRNA where it helps nucleate assembly of the platform of the 30S subunit by binding and bridging several RNA helices of the 16S rRNA. Functionally, forms an intersubunit bridge (bridge B4) with the 23S rRNA of the 50S subunit in the ribosome. This is Small ribosomal subunit protein uS15 from Rhodococcus opacus (strain B4).